Here is a 120-residue protein sequence, read N- to C-terminus: UPF0231 protein KPK_4613 (120 aa).

This sequence belongs to the UPF0231 family.

The polypeptide is UPF0231 protein KPK_4613 (Klebsiella pneumoniae (strain 342)).